Reading from the N-terminus, the 147-residue chain is Methylglyoxal synthase (147 aa).

Residues 4–147 (VSVPATKRIA…LLNFELLCES (144 aa)) enclose the MGS-like domain. Substrate is bound by residues histidine 17, lysine 21, 43-46 (TGTT), and 63-64 (SG). The active-site Proton donor/acceptor is the aspartate 69. A substrate-binding site is contributed by histidine 96.

This sequence belongs to the methylglyoxal synthase family.

The enzyme catalyses dihydroxyacetone phosphate = methylglyoxal + phosphate. Functionally, catalyzes the formation of methylglyoxal from dihydroxyacetone phosphate. This is Methylglyoxal synthase from Leptospira borgpetersenii serovar Hardjo-bovis (strain JB197).